An 82-amino-acid chain; its full sequence is MPQKQKVNVKIGDSVTVISGFHKNETGEVLKINRKNGKIIVKGINFKFKHVKPTTENEIGEIKQFEAPLHHSNVKLNLKKVL.

This sequence belongs to the universal ribosomal protein uL24 family. As to quaternary structure, part of the 50S ribosomal subunit.

It is found in the plastid. It localises to the chloroplast. Functionally, one of two assembly initiator proteins, it binds directly to the 5'-end of the 23S rRNA, where it nucleates assembly of the 50S subunit. This is Large ribosomal subunit protein uL24c (rpl24) from Phaeodactylum tricornutum (strain CCAP 1055/1).